The following is a 69-amino-acid chain: MEPRMSGSNLRFPYSRAYGGAGVGRNFEKSSRFSVQKEGIGAPGSARTALQFKLFLLSRLFFIFTSHIP.

This is an uncharacterized protein from Treponema pallidum (strain Nichols).